Reading from the N-terminus, the 182-residue chain is Nucleoid-associated protein At2g24020, chloroplastic (182 aa).

Residues 1–48 (MASMAATTNFTKSMLFPFSHVSGNASLNSQRRTWPKQYKSKNGYRSLR) constitute a chloroplast transit peptide.

The protein belongs to the YbaB/EbfC family. As to quaternary structure, homodimer. Interacts with ALB3 and ALB4.

It localises to the plastid. The protein resides in the chloroplast stroma. Participates with ALB4 in thylakoid protein targeting. May function with specific subset of thylakoidal proteins. Binds to DNA and alters its conformation. May be involved in regulation of gene expression, nucleoid organization and DNA protection. The protein is Nucleoid-associated protein At2g24020, chloroplastic of Arabidopsis thaliana (Mouse-ear cress).